Here is a 708-residue protein sequence, read N- to C-terminus: Large T antigen (708 aa).

M1 bears the N-acetylmethionine; by host mark. The 64-residue stretch at 12–75 (QLMDLLGLER…VKYAHQPDFG (64 aa)) folds into the J domain. Residues 63–89 (EDGVKYAHQPDFGGFWDATEIPTYGTD) form a binding of LT to the CUL7 complex region. Residues 103–107 (LFCSE) carry the LXCXE motif motif. S106, S112, S120, and S123 each carry phosphoserine; by host. A disordered region spans residues 109–134 (MPSSDDEATADSQHSTPPKKKRKVED). A Phosphothreonine; by host modification is found at T124. The short motif at 125–132 (PPKKKRKV) is the Nuclear localization signal element. Residues 139-254 (PSELLSFLSH…EESLPGGLKE (116 aa)) constitute a DNA-binding region (T-ag OBD). The T-ag D1-type zinc-finger motif lies at 265 to 357 (TKQVSWKLVT…KRVDSLQLTR (93 aa)). Residues C302, C305, H313, and H317 each coordinate Zn(2+). The binding to host TP53 protein stretch occupies residues 337 to 672 (CQQAVDTVLA…IDSQSQGSFQ (336 aa)). One can recognise an SF3 helicase domain in the interval 400-560 (KMDSVVYDFL…DYLKHCLERS (161 aa)). The ATPase activity stretch occupies residues 418-616 (KKRYWLFKGP…FSLSVYQKMK (199 aa)). Position 426–433 (426–433 (GPIDSGKT)) interacts with ATP. Positions 627 to 708 (DWLRNSDDDD…PPTPPPEPET (82 aa)) are C-terminal region. The interval 630–685 (RNSDDDDEDSQENADKNEDGGEKNMEDSGHETGIDSQSQGSFQAPQSSQSVHDHNQ) is disordered. Phosphoserine; by host is present on S639. Residues 642–662 (NADKNEDGGEKNMEDSGHETG) show a composition bias toward basic and acidic residues. A compositionally biased stretch (polar residues) spans 663 to 679 (IDSQSQGSFQAPQSSQS). 3 positions are modified to phosphoserine; by host: S676, S677, and S679. K697 bears the N6-acetyllysine; by host mark. A CPD region spans residues 699–708 (PPTPPPEPET). The residue at position 701 (T701) is a Phosphothreonine; by host.

Isoform large T antigen forms homohexamers in the presence of ATP. Interacts with host HDAC1. Interacts (via LXCXE domain) with host RB1; the interaction induces the aberrant dissociation of RB1-E2F1 complex thereby disrupting RB1's activity. Interacts (via LXCXE domain) with host pRB-related proteins RBL1 and RBL2. Interacts (via C-terminus) with host TOP1 and POLA1 allowing DNA replication. Interacts with host TP53, inhibiting TP53 binding to DNA. Interacts with host preinitiation complex components TBP, TFIIA and TFIID to regulate transcription initiation. LT interacts (via CPD region) with host FBW7gamma isoform (via WD repeats); seems to function as a competitive inhibitor of FBW7gamma function for physiologic substrates. LT interacts with host E3 ubiquitin ligase CUL7; this interaction seems to inhibit CUL7. Component of a SCF(CUL7)-like complex composed of SV40 Lt and host proteins CUL7, SKP1, RBX1, and FBXW8. LT interacts with host BUB1; this interaction induces activation of a DNA damage response and promotes p53 stabilization and phosphorylation. Interacts with host FAM111A and this interaction is required for efficient viral replication and sustained viral gene expression in restrictive cell types. The cofactor is Mg(2+). Post-translationally, phosphorylated on both serine and threonine residues. Phosphorylation on Ser-120 and Ser-123 inhibits viral replication, while phosphorylation on Thr-124 enhances replication by activating the DNA-binding domain. Phosphorylation on Thr-701 is required for binding to host FBW7gamma isoform. Dephosphorylated preferentially by PP2A on Ser-120, Ser-123, Ser-677 and perhaps Ser-679. Small t antigen inhibits the dephosphorylation by the AC form of PP2A. In terms of processing, O-Glycosylated near the C-terminal region. Acetylated by CBP in a TP53-dependent manner.

It localises to the host nucleus. The enzyme catalyses Couples ATP hydrolysis with the unwinding of duplex DNA by translocating in the 3'-5' direction.. It catalyses the reaction ATP + H2O = ADP + phosphate + H(+). DNA helicase activity is inhibited by ATP-gamma-S. Its function is as follows. Isoform large T antigen is a key early protein essential for both driving viral replication and inducing cellular transformation. Plays a role in viral genome replication by driving entry of quiescent cells into the cell cycle and by autoregulating the synthesis of viral early mRNA. Displays highly oncogenic activities by corrupting the host cellular checkpoint mechanisms that guard cell division and the transcription, replication, and repair of DNA. Participates in the modulation of cellular gene expression preceeding viral DNA replication. This step involves binding to host key cell cycle regulators retinoblastoma protein RB1/pRb and TP53. Induces the disassembly of host E2F1 transcription factors from RB1, thus promoting transcriptional activation of E2F1-regulated S-phase genes. Inhibits host TP53 binding to DNA, abrogating the ability of TP53 to stimulate gene expression. Plays the role of a TFIID-associated factor (TAF) in transcription initiation for all three RNA polymerases, by stabilizing the TBP-TFIIA complex on promoters. Initiates viral DNA replication and unwinding via interactions with the viral origin of replication. Binds two adjacent sites in the SV40 origin. The replication fork movement is facilitated by Large T antigen helicase activity. Has processive 3'-5' DNA helicase activity which requires a short 3' single-stranded region and ATP; other (d)NTPs can partially replace ATP. Activates the transcription of viral late mRNA, through host TBP and TFIIA stabilization. Interferes with histone deacetylation mediated by HDAC1, leading to activation of transcription. May inactivate the growth-suppressing properties of the E3 ubiquitin ligase CUL7. Functionally, isoform 17kT antigen targets host RBL2 for degradation and promotes cell proliferation. Transactivates host cyclin A promoter through its J domain. In terms of biological role, unwinds G4 DNA (planar arrays of 4 guanine bases stabilized by hydrogen bonds, parallel and antiparallel arrays were tested); unwinding occurs in the 3'-5' direction, requires a 3' single-stranded end and hydrolyzable ATP. This chain is Large T antigen, found in Macaca (macaques).